Here is a 310-residue protein sequence, read N- to C-terminus: UDP-N-acetylenolpyruvoylglucosamine reductase (310 aa).

Positions 31–216 (KIGGPADYFV…LRKIEELNQA (186 aa)) constitute an FAD-binding PCMH-type domain. Arginine 180 is a catalytic residue. Serine 230 functions as the Proton donor in the catalytic mechanism. Glutamate 300 is a catalytic residue.

It belongs to the MurB family. Requires FAD as cofactor.

The protein resides in the cytoplasm. It carries out the reaction UDP-N-acetyl-alpha-D-muramate + NADP(+) = UDP-N-acetyl-3-O-(1-carboxyvinyl)-alpha-D-glucosamine + NADPH + H(+). It functions in the pathway cell wall biogenesis; peptidoglycan biosynthesis. Functionally, cell wall formation. This Lachnoclostridium phytofermentans (strain ATCC 700394 / DSM 18823 / ISDg) (Clostridium phytofermentans) protein is UDP-N-acetylenolpyruvoylglucosamine reductase.